The following is a 276-amino-acid chain: Polyamine aminopropyltransferase (276 aa).

One can recognise a PABS domain in the interval 3–236 (ELWYTEKQTK…GLWTFTIGSK (234 aa)). Glutamine 32 contributes to the S-methyl-5'-thioadenosine binding site. Spermidine is bound by residues histidine 63 and aspartate 87. S-methyl-5'-thioadenosine contacts are provided by residues aspartate 107 and 138 to 139 (DG). Aspartate 156 serves as the catalytic Proton acceptor. 156–159 (DSTE) serves as a coordination point for spermidine. Residue proline 163 participates in S-methyl-5'-thioadenosine binding.

This sequence belongs to the spermidine/spermine synthase family. As to quaternary structure, homodimer or homotetramer.

Its subcellular location is the cytoplasm. The enzyme catalyses S-adenosyl 3-(methylsulfanyl)propylamine + putrescine = S-methyl-5'-thioadenosine + spermidine + H(+). Its pathway is amine and polyamine biosynthesis; spermidine biosynthesis; spermidine from putrescine: step 1/1. Its function is as follows. Involved in the cell growth and proliferation. Catalyzes the irreversible transfer of a propylamine group from the amino donor S-adenosylmethioninamine (decarboxy-AdoMet) to putrescine (1,4-diaminobutane) to yield spermidine. This chain is Polyamine aminopropyltransferase, found in Bacillus subtilis (strain 168).